Here is a 428-residue protein sequence, read N- to C-terminus: Trigger factor (428 aa).

One can recognise a PPIase FKBP-type domain in the interval 163 to 248; it reads KDIVTIDFEG…VKEIKAKELP (86 aa).

Belongs to the FKBP-type PPIase family. Tig subfamily.

It localises to the cytoplasm. It carries out the reaction [protein]-peptidylproline (omega=180) = [protein]-peptidylproline (omega=0). Its function is as follows. Involved in protein export. Acts as a chaperone by maintaining the newly synthesized protein in an open conformation. Functions as a peptidyl-prolyl cis-trans isomerase. This chain is Trigger factor, found in Lachnoclostridium phytofermentans (strain ATCC 700394 / DSM 18823 / ISDg) (Clostridium phytofermentans).